A 380-amino-acid polypeptide reads, in one-letter code: Homoserine O-acetyltransferase (380 aa).

The 297-residue stretch at 70–366 folds into the AB hydrolase-1 domain; the sequence is NAVLVFHALT…SPHGHDAFLI (297 aa). S186 acts as the Nucleophile in catalysis. Substrate is bound at residue R250. Residues D333 and H361 contribute to the active site. D362 lines the substrate pocket.

This sequence belongs to the AB hydrolase superfamily. MetX family. In terms of assembly, homodimer.

Its subcellular location is the cytoplasm. It catalyses the reaction L-homoserine + acetyl-CoA = O-acetyl-L-homoserine + CoA. It functions in the pathway amino-acid biosynthesis; L-methionine biosynthesis via de novo pathway; O-acetyl-L-homoserine from L-homoserine: step 1/1. In terms of biological role, transfers an acetyl group from acetyl-CoA to L-homoserine, forming acetyl-L-homoserine. The polypeptide is Homoserine O-acetyltransferase (Thermus thermophilus (strain ATCC 27634 / DSM 579 / HB8)).